The primary structure comprises 827 residues: Villin-1 (827 aa).

The tract at residues 1–126 is necessary for homodimerization; the sequence is MTKLSAQVKG…IRKGGVASGM (126 aa). The tract at residues 1–734 is core; sequence MTKLSAQVKG…YEDLKAELGN (734 aa). The Gelsolin-like 1 repeat unit spans residues 27-76; the sequence is MQMVPVPSNSFGSFFDGDCYVIQAIHKTGSNLSYDIHYWIGQASSQDEQG. LPA/PIP2-binding site stretches follow at residues 112-119 and 138-146; these read KKGIVIRK and RLLHVKGKR. 2 Gelsolin-like repeats span residues 148–188 and 265–309; these read VVAG…MERL and VVVR…QEKK. Position 366 is a phosphoserine (Ser366). 3 Gelsolin-like repeats span residues 407 to 457, 528 to 568, and 631 to 672; these read NLEL…DEIT, TKAF…DERE, and FLAT…DEKK. Ser735 carries the phosphoserine modification. Residues 735 to 827 form a headpiece region; sequence SGDWSQITAE…QNLKKEKGLF (93 aa). The 67-residue stretch at 761–827 folds into the HP domain; the sequence is SGPLPIFPLE…QNLKKEKGLF (67 aa). Residues 816–824 are LPA/PIP2-binding site 3; the sequence is KQQNLKKEK.

The protein belongs to the villin/gelsolin family. In terms of assembly, monomer. Homodimer; homodimerization is necessary for actin-bundling. Associates with F-actin; phosphorylation at tyrosine residues decreases the association with F-actin. Interacts (phosphorylated at C-terminus tyrosine phosphorylation sites) with PLCG1 (via the SH2 domains). Interacts (phosphorylated form) with PLCG1; the interaction is enhanced by hepatocyte growth factor (HGF). Post-translationally, phosphorylated on tyrosine residues by SRC. The unphosphorylated form increases the initial rate of actin-nucleating activity, whereas the tyrosine-phosphorylated form inhibits actin-nucleating activity, enhances actin-bundling activity and enhances actin-severing activity by reducing high Ca(2+) requirements. The tyrosine-phosphorylated form does not regulate actin-capping activity. Tyrosine phosphorylation is essential for cell migration: tyrosine phosphorylation sites in the N-terminus half regulate actin reorganization and cell morphology, whereas tyrosine phosphorylation sites in the C-terminus half regulate cell migration via interaction with PLCG1. Tyrosine phosphorylation is induced by epidermal growth factor (EGF) and stimulates cell migration.

The protein localises to the cytoplasm. Its subcellular location is the cytoskeleton. The protein resides in the cell projection. It is found in the lamellipodium. It localises to the ruffle. The protein localises to the microvillus. Its subcellular location is the filopodium tip. The protein resides in the filopodium. Functionally, epithelial cell-specific Ca(2+)-regulated actin-modifying protein that modulates the reorganization of microvillar actin filaments. Plays a role in the actin nucleation, actin filament bundle assembly, actin filament capping and severing. Binds phosphatidylinositol 4,5-bisphosphate (PIP2) and lysophosphatidic acid (LPA); binds LPA with higher affinity than PIP2. Binding to LPA increases its phosphorylation by SRC and inhibits all actin-modifying activities. Binding to PIP2 inhibits actin-capping and -severing activities but enhances actin-bundling activity. Regulates the intestinal epithelial cell morphology, cell invasion, cell migration and apoptosis. Protects against apoptosis induced by dextran sodium sulfate (DSS) in the gastrointestinal epithelium. Appears to regulate cell death by maintaining mitochondrial integrity. Enhances hepatocyte growth factor (HGF)-induced epithelial cell motility, chemotaxis and wound repair. The sequence is that of Villin-1 (VIL1) from Bos taurus (Bovine).